We begin with the raw amino-acid sequence, 619 residues long: MKRLGHVPIHKGDFHLLPPKVQRFVAEKAELMRPRGIYICDGSQHEADEIIDKLIERGMLSPLKAYENNYICRTDPKDVARVESKTWMVTPDKYQTVCHTPDGIEPIMGHWMSPDSLATELDSRFPGCMAGRIMYVIPFSMGPVGGPLSKIGVQLTDSNYVVLSMRIMTRVGHEVWDALGDNDFVRCIHSVGLPRPVKQRVINHWPCNPERVLIAHRPAEREIWSFGSGYGGNSLLGKKMLALRIASNIAKDEGWMAEHMLIMGVTRPDGKEHFIAAAFPSACGKTNLAMLEPALPGWKVRCVGDDIAWMKFGEDGRLYAINPEYGFFGVAPGTSKKTNPMAVATFQKNSIFTNVGETANGEYFWEGLEDEIKDKNVDMINWLGEKWRIGDPGLCAHPNSRFAAPASQCPIIHPEWESPKGVPIDAIIFGGRRPAGVPLVFETRSWLHGIFTGACLKSEATAAAEHKGKTVMHDPMAMRPFMGYNFGHYLQHWIDLNKDGRKVPKIYHVNWFRRDANNKFLWPGYGQNIRVIDWIVRRLDGEPDIGVDTPIGIVPKKGAINASGLPDIQWDELMSVPKEYWTNDAKEIRKFLEEQVGPDLPKEIRAEMDAQEERINKQA.

Residues Arg-81 and 230–232 (YGG) each bind substrate. Lys-239 and His-259 together coordinate Mn(2+). Position 281 (Ser-281) interacts with substrate. 282 to 287 (ACGKTN) contacts GTP. Cys-283 is a catalytic residue. Residue Asp-306 coordinates Mn(2+). 399–401 (NSR) provides a ligand contact to substrate. Residues Arg-401, Arg-432, and 525-528 (YGQN) contribute to the GTP site.

Belongs to the phosphoenolpyruvate carboxykinase [GTP] family. Monomer. It depends on Mn(2+) as a cofactor.

The catalysed reaction is oxaloacetate + GTP = phosphoenolpyruvate + GDP + CO2. In terms of biological role, in parasitic nematodes PEPCK carboxylates phosphoenolpyruvate to oxaloacetate thus introducing the products of glycolysis to mitochondrial metabolism. Functionally, catalyzes the conversion of oxaloacetate (OAA) to phosphoenolpyruvate (PEP), the rate-limiting step in the metabolic pathway that produces glucose from lactate and other precursors derived from the citric acid cycle. The chain is Phosphoenolpyruvate carboxykinase [GTP] (PEPCK) from Haemonchus contortus (Barber pole worm).